A 353-amino-acid chain; its full sequence is Photosystem II protein D1 (353 aa).

Thr2 bears the N-acetylthreonine mark. Thr2 carries the phosphothreonine modification. 3 consecutive transmembrane segments (helical) span residues 29–46, 118–133, and 142–156; these read YIGW…TATS, HFLL…EWEL, and WIAV…AAAA. His118 contributes to the chlorophyll a binding site. Residue Tyr126 participates in pheophytin a binding. Asp170 and Glu189 together coordinate [CaMn4O5] cluster. Residues 197–218 traverse the membrane as a helical segment; sequence FHMLGVAGVFGGSLFSAMHGSL. A chlorophyll a-binding site is contributed by His198. A quinone contacts are provided by residues His215 and 264–265; that span reads SF. Residue His215 participates in Fe cation binding. His272 lines the Fe cation pocket. A helical membrane pass occupies residues 274-288; that stretch reads FLAAWPVVGIWFTAL. [CaMn4O5] cluster contacts are provided by His332, Glu333, Asp342, and Ala344. Positions 345–353 are excised as a propeptide; that stretch reads SVDAPSING.

Belongs to the reaction center PufL/M/PsbA/D family. PSII is composed of 1 copy each of membrane proteins PsbA, PsbB, PsbC, PsbD, PsbE, PsbF, PsbH, PsbI, PsbJ, PsbK, PsbL, PsbM, PsbT, PsbX, PsbY, PsbZ, Psb30/Ycf12, at least 3 peripheral proteins of the oxygen-evolving complex and a large number of cofactors. It forms dimeric complexes. It depends on The D1/D2 heterodimer binds P680, chlorophylls that are the primary electron donor of PSII, and subsequent electron acceptors. It shares a non-heme iron and each subunit binds pheophytin, quinone, additional chlorophylls, carotenoids and lipids. D1 provides most of the ligands for the Mn4-Ca-O5 cluster of the oxygen-evolving complex (OEC). There is also a Cl(-1) ion associated with D1 and D2, which is required for oxygen evolution. The PSII complex binds additional chlorophylls, carotenoids and specific lipids. as a cofactor. Post-translationally, tyr-161 forms a radical intermediate that is referred to as redox-active TyrZ, YZ or Y-Z. In terms of processing, C-terminally processed by CTPA; processing is essential to allow assembly of the oxygen-evolving complex and thus photosynthetic growth.

The protein resides in the plastid. The protein localises to the chloroplast thylakoid membrane. It catalyses the reaction 2 a plastoquinone + 4 hnu + 2 H2O = 2 a plastoquinol + O2. In terms of biological role, photosystem II (PSII) is a light-driven water:plastoquinone oxidoreductase that uses light energy to abstract electrons from H(2)O, generating O(2) and a proton gradient subsequently used for ATP formation. It consists of a core antenna complex that captures photons, and an electron transfer chain that converts photonic excitation into a charge separation. The D1/D2 (PsbA/PsbD) reaction center heterodimer binds P680, the primary electron donor of PSII as well as several subsequent electron acceptors. This Adiantum capillus-veneris (Maidenhair fern) protein is Photosystem II protein D1.